The chain runs to 116 residues: Large ribosomal subunit protein bL19 (116 aa).

Belongs to the bacterial ribosomal protein bL19 family.

This protein is located at the 30S-50S ribosomal subunit interface and may play a role in the structure and function of the aminoacyl-tRNA binding site. The chain is Large ribosomal subunit protein bL19 (rplS) from Streptomyces lividans.